The following is a 200-amino-acid chain: Peptidyl-tRNA hydrolase (200 aa).

Tyrosine 16 is a binding site for tRNA. The active-site Proton acceptor is the histidine 21. 3 residues coordinate tRNA: phenylalanine 67, asparagine 69, and asparagine 115.

Belongs to the PTH family. In terms of assembly, monomer.

It is found in the cytoplasm. It catalyses the reaction an N-acyl-L-alpha-aminoacyl-tRNA + H2O = an N-acyl-L-amino acid + a tRNA + H(+). Functionally, hydrolyzes ribosome-free peptidyl-tRNAs (with 1 or more amino acids incorporated), which drop off the ribosome during protein synthesis, or as a result of ribosome stalling. Its function is as follows. Catalyzes the release of premature peptidyl moieties from peptidyl-tRNA molecules trapped in stalled 50S ribosomal subunits, and thus maintains levels of free tRNAs and 50S ribosomes. This Prochlorococcus marinus (strain AS9601) protein is Peptidyl-tRNA hydrolase.